Reading from the N-terminus, the 152-residue chain is Ribonuclease H (152 aa).

Positions 1-142 (MKEVTIYTDG…CDELARAAIA (142 aa)) constitute an RNase H type-1 domain. Mg(2+)-binding residues include D9, E47, D69, and D134.

The protein belongs to the RNase H family. In terms of assembly, monomer. Mg(2+) serves as cofactor.

It is found in the cytoplasm. The catalysed reaction is Endonucleolytic cleavage to 5'-phosphomonoester.. In terms of biological role, endonuclease that specifically degrades the RNA of RNA-DNA hybrids. This chain is Ribonuclease H, found in Moorella thermoacetica (strain ATCC 39073 / JCM 9320).